The primary structure comprises 190 residues: Large ribosomal subunit protein eL15 (190 aa).

Belongs to the eukaryotic ribosomal protein eL15 family.

In Nanoarchaeum equitans (strain Kin4-M), this protein is Large ribosomal subunit protein eL15 (rpl15e).